A 1492-amino-acid polypeptide reads, in one-letter code: Copper-transporting ATPase 1 (1492 aa).

At 1–645 (MEPNMDANSI…KREIKQWRGS (645 aa)) the chain is on the cytoplasmic side. HMA domains lie at 8 to 74 (NSIT…FDAL) and 85 to 151 (TNTV…LDMG). Cu(+)-binding residues include Thr-18, Cys-19, and Cys-22. At Thr-152 the chain carries Phosphothreonine. Positions 171–237 (VLLKMRVEGM…QIEAVGFPAF (67 aa)) constitute an HMA 3 domain. The Cu(+) site is built by Cys-182 and Cys-185. At Ser-270 the chain carries Phosphoserine. Residues 277–343 (SAITFTIDGM…AIEAVSPGQY (67 aa)) enclose the HMA 4 domain. Cu(+)-binding residues include Cys-288 and Cys-291. Residue Thr-327 is modified to Phosphothreonine. A phosphoserine mark is found at Ser-339, Ser-353, Ser-357, and Ser-362. 3 consecutive HMA domains span residues 377 to 443 (QEVV…FDAV), 480 to 546 (NKCY…FGAV), and 556 to 622 (GILE…FEAS). Cu(+)-binding residues include Cys-388, Cys-391, Cys-491, Cys-494, Cys-567, and Cys-570. The helical transmembrane segment at 646-667 (FLVSLFFCIPVMGLMIYMMVMD) threads the bilayer. The Extracellular portion of the chain corresponds to 668–706 (HHLATLNHNQNMSNEEMINMHSSMFLERQILPGLSIMNL). Asn-678 carries an N-linked (GlcNAc...) asparagine glycan. A helical membrane pass occupies residues 707-726 (LSLLLCLPVQFCGGWYFYIQ). The Cytoplasmic segment spans residues 727–733 (AYKALRH). The helical transmembrane segment at 734 to 754 (KTANMDVLIVLATTIAFAYSL) threads the bilayer. At 755–773 (VILLVAMYERAKVNPITFF) the chain is on the extracellular side. Residues 774-794 (DTPPMLFVFIALGRWLEHIAK) traverse the membrane as a helical segment. The Cytoplasmic segment spans residues 795-927 (GKTSEALAKL…SKAPIQQFAD (133 aa)). The chain crosses the membrane as a helical span at residues 928–951 (KLSGYFVPFIVLVSIVTLLVWIII). Residues 952 to 981 (GFQNFEIVEAYFPGYNRSISRTETIIRFAF) lie on the Extracellular side of the membrane. The chain crosses the membrane as a helical span at residues 982 to 1003 (QASITVLCIACPCSLGLATPTA). At 1004–1348 (VMVGTGVGAQ…LSRKTVKRIR (345 aa)) the chain is on the cytoplasmic side. Asp-1036 (4-aspartylphosphate intermediate) is an active-site residue. Residue Glu-1073 participates in ATP binding. Residue Thr-1204 is modified to Phosphothreonine. Residues Asp-1293 and Asp-1297 each contribute to the Mg(2+) site. Residues 1349–1366 (INFVFALIYNLIGIPIAA) traverse the membrane as a helical segment. The Extracellular segment spans residues 1367–1377 (GVFLPIGLVLQ). The chain crosses the membrane as a helical span at residues 1378–1397 (PWMGSAAMAASSVSVVLSSL). The Cytoplasmic segment spans residues 1398–1492 (FLKLYRKPTY…DFREDDDTTL (95 aa)). Phosphoserine occurs at positions 1422, 1424, 1452, 1455, and 1458. An Endocytosis signal motif is present at residues 1459–1460 (LL). Residues Ser-1461, Ser-1465, Ser-1468, and Ser-1478 each carry the phosphoserine modification. The interval 1478–1492 (SLLVGDFREDDDTTL) is PDZD11-binding. An Endocytosis signal motif is present at residues 1479-1480 (LL).

Belongs to the cation transport ATPase (P-type) (TC 3.A.3) family. Type IB subfamily. In terms of assembly, monomer. Interacts with PDZD11. Interacts with ATOX1 and COMMD1. Interacts with TYRP1. Directly interacts with SOD3; this interaction is copper-dependent and is required for SOD3 activity. Expressed in hippocampal neuron (at protein level). Expressed in anterior pituitary gland (at protein level).

It localises to the golgi apparatus. The protein resides in the trans-Golgi network membrane. It is found in the cell membrane. Its subcellular location is the melanosome membrane. The protein localises to the early endosome membrane. It localises to the cell projection. The protein resides in the axon. It is found in the dendrite. Its subcellular location is the postsynaptic density. The enzyme catalyses Cu(+)(in) + ATP + H2O = Cu(+)(out) + ADP + phosphate + H(+). In terms of biological role, ATP-driven copper (Cu(+)) ion pump that plays an important role in intracellular copper ion homeostasis. Within a catalytic cycle, acquires Cu(+) ion from donor protein on the cytoplasmic side of the membrane and delivers it to acceptor protein on the lumenal side. The transfer of Cu(+) ion across the membrane is coupled to ATP hydrolysis and is associated with a transient phosphorylation that shifts the pump conformation from inward-facing to outward-facing state. Under physiological conditions, at low cytosolic copper concentration, it is localized at the trans-Golgi network (TGN) where it transfers Cu(+) ions to cuproenzymes of the secretory pathway. Upon elevated cytosolic copper concentrations, it relocalizes to the plasma membrane where it is responsible for the export of excess Cu(+) ions. May play a dual role in neuron function and survival by regulating cooper efflux and neuronal transmission at the synapse as well as by supplying Cu(+) ions to enzymes such as PAM, TYR and SOD3. In the melanosomes of pigmented cells, provides copper cofactor to TYR to form an active TYR holoenzyme for melanin biosynthesis. The protein is Copper-transporting ATPase 1 of Rattus norvegicus (Rat).